The chain runs to 370 residues: Protein commissureless 1 (370 aa).

The Extracellular segment spans residues 1 to 136 (MISTTDYPTV…DADMHVIINY (136 aa)). Residues 108-131 (LRDRSEESGESSWWSQIFGDADMH) are required for vesicular localization. Residues 137 to 157 (LWIGVVSSLVILSLVFILFSC) form a helical membrane-spanning segment. Over 158 to 370 (YFYRKFRTWK…CASLVVVVAA (213 aa)) the chain is Cytoplasmic. 2 short sequence motifs (PY-motif) span residues 220–223 (PPCY) and 229–232 (LPSY). The interval 227 to 237 (TGLPSYDEALH) is interaction with Nedd4. Positions 287–312 (VEEDKADSSSSTSASASPSSSESSNL) are disordered. Residues 294–312 (SSSSTSASASPSSSESSNL) show a composition bias toward low complexity.

Belongs to the commissureless family. In terms of assembly, interacts (probably via PY-motifs) with Nedd4 (via WW2 domain). Interacts with Robo. Post-translationally, ubiquitinated by Nedd4; which promotes endocytosis of the comm/robo complex and comm proteasomal degradation. Not ubiquitinated by Nedd4.

It localises to the cytoplasmic vesicle membrane. It is found in the cell membrane. Its function is as follows. Controls axon guidance across the CNS midline by preventing the delivery of Robo to the growth cone. The chain is Protein commissureless 1 from Drosophila melanogaster (Fruit fly).